A 1152-amino-acid polypeptide reads, in one-letter code: Integrin alpha-M (1152 aa).

Residues 1-16 form the signal peptide; it reads MALRVLLLTALTLCHG. The Extracellular segment spans residues 17-1104; the sequence is FNLDTENAMT…TKVEPFEVPN (1088 aa). FG-GAP repeat units follow at residues 18-75 and 76-135; these read NLDT…SCEP and IRLQ…QQPQ. Residues Cys-66 and Cys-73 are joined by a disulfide bond. N-linked (GlcNAc...) asparagine glycosylation occurs at Asn-86. An intrachain disulfide couples Cys-105 to Cys-123. The VWFA domain occupies 150 to 328; sequence DIAFLIDGSG…EALKTIQNQL (179 aa). An N-linked (GlcNAc...) asparagine glycan is attached at Asn-240. FG-GAP repeat units follow at residues 339-390, 391-442, 443-503, 506-564, and 569-629; these read QTGS…STFI, NMTR…TGMW, ESNA…RARW, DAVL…SGIS, and QRIA…FNPR. Asn-391 carries N-linked (GlcNAc...) asparagine glycosylation. Residues Asp-465, Asp-467, Asn-469, Asp-473, Asp-529, Asn-531, Asp-533, Asp-537, Asp-592, Asp-596, and Asp-600 each coordinate Ca(2+). Residue Asn-469 is glycosylated (N-linked (GlcNAc...) asparagine). A disulfide bond links Cys-654 and Cys-711. 3 N-linked (GlcNAc...) asparagine glycosylation sites follow: Asn-692, Asn-696, and Asn-734. A disulfide bridge links Cys-770 with Cys-776. An N-linked (GlcNAc...) asparagine glycan is attached at Asn-801. Cysteines 847 and 864 form a disulfide. N-linked (GlcNAc...) asparagine glycans are attached at residues Asn-880, Asn-900, Asn-911, Asn-940, Asn-946, Asn-978, Asn-993, and Asn-1021. 2 disulfides stabilise this stretch: Cys-998/Cys-1022 and Cys-1027/Cys-1032. Asn-1044, Asn-1050, and Asn-1075 each carry an N-linked (GlcNAc...) asparagine glycan. The helical transmembrane segment at 1105-1128 threads the bilayer; sequence PLPLIVGSSVGGLLLLALITAALY. Residues 1129 to 1152 are Cytoplasmic-facing; the sequence is KLGFFKRQYKDMMSEGGPPGAEPQ. The GFFKR motif signature appears at 1131 to 1135; sequence GFFKR.

This sequence belongs to the integrin alpha chain family. Heterodimer of an alpha and a beta subunit. ITGAM associates with ITGB2. Found in a complex with CD177 and ITGB2/CD18. Interacts with JAM3. Interacts with THBD. Interacts with complement factor H/CFH; this interaction mediates adhesion of neutrophils to pathogens leading to pathogen clearance. Interacts with TMEM268; this interaction inhibits ITGAM degradation via the endosome-lysosome pathway. In terms of tissue distribution, predominantly expressed in monocytes and granulocytes. Expressed in neutrophils (at protein level).

Its subcellular location is the cell membrane. It localises to the membrane raft. Integrin ITGAM/ITGB2 is implicated in various adhesive interactions of monocytes, macrophages and granulocytes as well as in mediating the uptake of complement-coated particles and pathogens. It is identical with CR-3, the receptor for the iC3b fragment of the third complement component. It probably recognizes the R-G-D peptide in C3b. Integrin ITGAM/ITGB2 is also a receptor for fibrinogen, factor X and ICAM1. It recognizes P1 and P2 peptides of fibrinogen gamma chain. Regulates neutrophil migration. In association with beta subunit ITGB2/CD18, required for CD177-PRTN3-mediated activation of TNF primed neutrophils. May regulate phagocytosis-induced apoptosis in extravasated neutrophils. May play a role in mast cell development. Required with TYROBP/DAP12 in microglia to control production of microglial superoxide ions which promote the neuronal apoptosis that occurs during brain development. In Homo sapiens (Human), this protein is Integrin alpha-M (ITGAM).